Reading from the N-terminus, the 442-residue chain is Probable serine/threonine-protein kinase kinase DDB_G0280643 (442 aa).

Residues 74 to 398 (IDPNTIVDCG…VNEILESPYF (325 aa)) enclose the Protein kinase domain. Residues 80–88 (VDCGTNGIM) and Lys-103 contribute to the ATP site. Asp-231 acts as the Proton acceptor in catalysis.

This sequence belongs to the protein kinase superfamily. CMGC Ser/Thr protein kinase family. MAP kinase subfamily.

The enzyme catalyses L-seryl-[protein] + ATP = O-phospho-L-seryl-[protein] + ADP + H(+). The catalysed reaction is L-threonyl-[protein] + ATP = O-phospho-L-threonyl-[protein] + ADP + H(+). This is Probable serine/threonine-protein kinase kinase DDB_G0280643 from Dictyostelium discoideum (Social amoeba).